The following is a 478-amino-acid chain: Protein nucleotidyltransferase YdiU (478 aa).

ATP-binding residues include Gly84, Gly86, Arg87, Lys107, Asp119, Gly120, Arg170, and Arg177. Asp246 serves as the catalytic Proton acceptor. Residues Asn247 and Asp256 each contribute to the Mg(2+) site. Residue Asp256 participates in ATP binding.

The protein belongs to the SELO family. Requires Mg(2+) as cofactor. Mn(2+) serves as cofactor.

The catalysed reaction is L-seryl-[protein] + ATP = 3-O-(5'-adenylyl)-L-seryl-[protein] + diphosphate. It carries out the reaction L-threonyl-[protein] + ATP = 3-O-(5'-adenylyl)-L-threonyl-[protein] + diphosphate. It catalyses the reaction L-tyrosyl-[protein] + ATP = O-(5'-adenylyl)-L-tyrosyl-[protein] + diphosphate. The enzyme catalyses L-histidyl-[protein] + UTP = N(tele)-(5'-uridylyl)-L-histidyl-[protein] + diphosphate. The catalysed reaction is L-seryl-[protein] + UTP = O-(5'-uridylyl)-L-seryl-[protein] + diphosphate. It carries out the reaction L-tyrosyl-[protein] + UTP = O-(5'-uridylyl)-L-tyrosyl-[protein] + diphosphate. Nucleotidyltransferase involved in the post-translational modification of proteins. It can catalyze the addition of adenosine monophosphate (AMP) or uridine monophosphate (UMP) to a protein, resulting in modifications known as AMPylation and UMPylation. In Escherichia coli O139:H28 (strain E24377A / ETEC), this protein is Protein nucleotidyltransferase YdiU.